We begin with the raw amino-acid sequence, 66 residues long: MKIDIPVKGMTCQHCVDKIEKFVGELEGVSYIGVDLDKQSVQVEFSAPASAEAIEEAILDAGYELG.

Positions 1 to 66 (MKIDIPVKGM…AILDAGYELG (66 aa)) constitute an HMA domain. Cu cation-binding residues include C12 and C15.

Part of a cation-transporting system which is associated with copper export out of the H.pylori cells. This Helicobacter felis (strain ATCC 49179 / CCUG 28539 / NCTC 12436 / CS1) protein is COP-associated protein (copP).